Reading from the N-terminus, the 430-residue chain is Adenylosuccinate synthetase (430 aa).

Residues 13 to 19 (GDEGKGK) and 41 to 43 (GHT) contribute to the GTP site. The active-site Proton acceptor is D14. D14 and G41 together coordinate Mg(2+). Residues 14–17 (DEGK), 39–42 (NAGH), T130, R144, Q225, T240, and R304 each bind IMP. The active-site Proton donor is the H42. Residue 300-306 (ATTGRAR) participates in substrate binding. Residues R306, 332 to 334 (KLD), and 414 to 416 (STG) contribute to the GTP site.

It belongs to the adenylosuccinate synthetase family. As to quaternary structure, homodimer. Requires Mg(2+) as cofactor.

It localises to the cytoplasm. The catalysed reaction is IMP + L-aspartate + GTP = N(6)-(1,2-dicarboxyethyl)-AMP + GDP + phosphate + 2 H(+). It participates in purine metabolism; AMP biosynthesis via de novo pathway; AMP from IMP: step 1/2. Plays an important role in the de novo pathway of purine nucleotide biosynthesis. Catalyzes the first committed step in the biosynthesis of AMP from IMP. The chain is Adenylosuccinate synthetase from Pseudomonas aeruginosa (strain LESB58).